The primary structure comprises 103 residues: Hexon-interlacing protein (103 aa).

A coiled-coil region spans residues Leu-72–Arg-99.

Belongs to the adenoviridae hexon-interlacing protein family. As to quaternary structure, homotrimer. Interacts with hexon protein; this interaction tethers the hexons together. Self-interacts with adjacent proteins. Interacts with kinesin light chain KLC1; this interaction leads to capsid disruption at the nuclear pore complex during virus entry into host cell.

The protein resides in the virion. It localises to the host nucleus. In terms of biological role, structural component of the virion that acts as a cement protein on the capsid exterior and forms triskelion structures consisting of three molecules that stabilize three hexon trimers at the center of each icosahedral facet and fixes the peripentonal hexons. Dispensable for assembly. During virus entry, recruits the anterograde motor kinesin-1 to the capsid docked at the nuclear pore complex thereby subjecting the docked capsid to a pulling force. The resulting tension leads to capsid disruption, dispersion of capsid fragments toward cell periphery and eventually viral DNA entry into the host nucleus. This Canis lupus familiaris (Dog) protein is Hexon-interlacing protein.